Consider the following 387-residue polypeptide: Phosphoglycerate kinase (387 aa).

Substrate is bound by residues Asp-21–Asn-23, Arg-36, His-59–Arg-62, Arg-113, and Arg-146. Residues Lys-197, Glu-314, and Gly-340–Thr-343 contribute to the ATP site.

This sequence belongs to the phosphoglycerate kinase family. As to quaternary structure, monomer.

It is found in the cytoplasm. The catalysed reaction is (2R)-3-phosphoglycerate + ATP = (2R)-3-phospho-glyceroyl phosphate + ADP. It functions in the pathway carbohydrate degradation; glycolysis; pyruvate from D-glyceraldehyde 3-phosphate: step 2/5. In Aliivibrio salmonicida (strain LFI1238) (Vibrio salmonicida (strain LFI1238)), this protein is Phosphoglycerate kinase.